A 339-amino-acid chain; its full sequence is Serpentine receptor class delta-19 (339 aa).

The next 7 helical transmembrane spans lie at isoleucine 2–leucine 22, alanine 39–isoleucine 59, valine 90–phenylalanine 110, isoleucine 130–valine 150, valine 187–leucine 207, isoleucine 242–leucine 262, and serine 270–valine 290.

Belongs to the nematode receptor-like protein srd family.

It is found in the membrane. This Caenorhabditis elegans protein is Serpentine receptor class delta-19 (srd-19).